The primary structure comprises 804 residues: Leucine--tRNA ligase (804 aa).

Residues 39–50 (PFPSGKGLHVGH) carry the 'HIGH' region motif. A 'KMSKS' region motif is present at residues 573–577 (KMSKS). An ATP-binding site is contributed by K576.

This sequence belongs to the class-I aminoacyl-tRNA synthetase family.

It localises to the cytoplasm. It carries out the reaction tRNA(Leu) + L-leucine + ATP = L-leucyl-tRNA(Leu) + AMP + diphosphate. This chain is Leucine--tRNA ligase, found in Lactobacillus helveticus (strain DPC 4571).